Here is a 557-residue protein sequence, read N- to C-terminus: Thermosome subunit 2 (557 aa).

Residues 527-557 (DLSTGGDDDEEGGAPGGMGGMGGMGGMGGAM) form a disordered region. The segment covering 539–557 (GAPGGMGGMGGMGGMGGAM) has biased composition (gly residues).

It belongs to the TCP-1 chaperonin family. The thermosome or CCT complex is a oligomeric complex of two octameric double-ring structures; the complex is probably a heterooligomer of CCT1, CCT2 and CCT3 with yet unknown stoichiometry.

Its function is as follows. Molecular chaperone that assists in the folding or refolding of nascent or denatured proteins along with ATP hydrolysis. ATPase activity is highest in thermosome assemblies containing CCT1:CCT2, followed by assemblies containing CCT1:CCT2:CCT3. Seems to contribute to thermosome ATPase activity. Not required for growth. The sequence is that of Thermosome subunit 2 (cct2) from Haloferax volcanii (strain ATCC 29605 / DSM 3757 / JCM 8879 / NBRC 14742 / NCIMB 2012 / VKM B-1768 / DS2) (Halobacterium volcanii).